An 83-amino-acid polypeptide reads, in one-letter code: Normal mucosa of esophagus-specific gene 1 protein (83 aa).

Belongs to the complex I NDUFA4 subunit family. As to expression, expressed mainly in stomach, placenta, small intestine and colon, as well as in normal mucosa of esophagus. Down-regulated in esophageal squamous cell carcinoma.

It is found in the nucleus. This is Normal mucosa of esophagus-specific gene 1 protein (NMES1) from Homo sapiens (Human).